Consider the following 885-residue polypeptide: MRAIIKFKWAIAAIVLALTVVLSLFSPNLTELANQKGQAQLPADAVSERANAILKQAGEDNNSISVVFTLDNAIKKETENQLRIIIDKIKKIDGVEEVTSPLSAEKEVKDQLMSKDKKTVLMPVTITGSDKKAEKIADEIYQIVPDDLTAYITGASLINQDFAHSSEEGLKKTEVITVCLIIGLLLIVFRSVVTPFIPIVVVGFSYLISQSILGILVYNVDFPISTFTQTFLVAILFGIGTDYCILLLTRFREELANGHDKKEAALIAYRTGGKTLFISGFAVLIGFSALGFAKFAIFQSAVGVAVGVGILMIILYTLLPLFMVTLGEKLFWPSKKVLSHSDNKLWAFLGRHSVARPFLFIVITVVITLPFILTYDDQISFDSTAEISSDYKSIKALEAIKDGFGEGKAFPINVVVKGDKDLTTADTIPYLGNISKAIEKVDHVDSVMTITQPTGKKIKDLYIDNQLGSVSDGLDKTVKGIADVQSGLTDIENGLNQMAGQTGSASNGGSGGSLGDAADGLGKINQQLQLVSKQISQTGNTAQTVQQLTAISGQLGQIQTGLEQANQQLSGQQAQAGTLTESLKKLSEGVKSANEGLTKVSDGITASSDILEDMSKSPTVRDTGIFIPDQVMKDKDFKKSIDQYSFADGKGVQLSVVLDSNPYSEQAITTINQIKKAVANEVDGTPLENAQIVYGGVTSMNADLKELSTTDFSRTMVIMIIGLFIVLTILFRSMIMPIYMIASLLLTYYTSISITELIFVNGLGNAGVSWAVPFFSFVILIALGVDYSIFLLDRFKEEVHLGIEQGVVRSMSKMGSVIITAAIILAGTFAAMMPSGVNTLMQVASVIIIGLLLYGLVILPLFIPAIIATFGEGNWWPFGRKKGKE.

A run of 7 helical transmembrane segments spans residues 9–29, 181–201, 202–222, 227–247, 278–298, 304–324, and 354–374; these read WAIA…SPNL, IIGL…PIVV, VGFS…NVDF, FTQT…CILL, ISGF…FAIF, VAVG…LFMV, and VARP…FILT. The interval 498–518 is disordered; it reads MAGQTGSASNGGSGGSLGDAA. Helical transmembrane passes span 716–736, 740–760, 772–792, 817–837, and 847–867; these read MVIM…SMIM, MIAS…LIFV, VPFF…IFLL, VIIT…PSGV, and IIIG…PAII.

The protein belongs to the resistance-nodulation-cell division (RND) (TC 2.A.6) family. MmpL subfamily.

Its subcellular location is the cell membrane. The polypeptide is Putative membrane protein YdgH (ydgH) (Bacillus subtilis (strain 168)).